We begin with the raw amino-acid sequence, 79 residues long: MAFLKKSLFLVLFLGIVSLSICEEEKREGEEEEKQEEENEELSEEELRERRAWLDKLKSIGKVVGKVAIGVAKNLLNPQ.

Positions 1-22 are cleaved as a signal peptide; sequence MAFLKKSLFLVLFLGIVSLSIC. A propeptide spanning residues 23–49 is cleaved from the precursor; it reads EEEKREGEEEEKQEEENEELSEEELRE.

This sequence belongs to the frog skin active peptide (FSAP) family. Dermaseptin subfamily. Expressed by the skin glands.

It is found in the secreted. Its function is as follows. Has antibacterial activity. The sequence is that of Raniseptin-3 from Boana raniceps (Chaco tree frog).